Here is a 968-residue protein sequence, read N- to C-terminus: Probable histidine kinase 1 (968 aa).

Coiled-coil stretches lie at residues 89–120 (LLKE…FQDE) and 169–204 (KERA…QSHT). The region spanning 372–655 (TMSHEIRSPL…TFSFVLPCKI (284 aa)) is the Histidine kinase domain. His-375 bears the Phosphohistidine; by autocatalysis mark. Positions 737 to 757 (STNSASTAHQSNGPSVSRTNK) are disordered. A compositionally biased stretch (polar residues) spans 738-754 (TNSASTAHQSNGPSVSR). Positions 818–965 (KILLVEDNKV…NIKECLQQYL (148 aa)) constitute a Response regulatory domain. Residue Asp-867 is modified to 4-aspartylphosphate.

Activation probably requires a transfer of a phosphate group between a His in the transmitter domain and an Asp of the receiver domain.

It carries out the reaction ATP + protein L-histidine = ADP + protein N-phospho-L-histidine.. Its function is as follows. Cytokinin receptor related to bacterial two-component regulators. Functions as a histidine kinase and transmits the stress signal to a downstream MAPK cascade. The protein is Probable histidine kinase 1 of Oryza sativa subsp. indica (Rice).